The chain runs to 101 residues: Small ribosomal subunit protein uS14 (101 aa).

It belongs to the universal ribosomal protein uS14 family. Part of the 30S ribosomal subunit. Contacts proteins S3 and S10.

Functionally, binds 16S rRNA, required for the assembly of 30S particles and may also be responsible for determining the conformation of the 16S rRNA at the A site. In Paramagnetospirillum magneticum (strain ATCC 700264 / AMB-1) (Magnetospirillum magneticum), this protein is Small ribosomal subunit protein uS14.